Reading from the N-terminus, the 349-residue chain is Mitochondrial carrier protein SCaMC-3L (349 aa).

4 helical membrane-spanning segments follow: residues 88 to 104 (GALWKFLLSGAMAGAVS), 149 to 168 (GNGINVLKIAPEYAIKFSVF), 188 to 205 (LLAGSLAVATSQTLINPM), and 243 to 261 (YLPNMLGIIPYACTDLAVY). Solcar repeat units lie at residues 88–174 (GALW…CKNY) and 182–267 (PPFQ…LNCL).

It belongs to the mitochondrial carrier (TC 2.A.29) family.

The protein resides in the mitochondrion inner membrane. It catalyses the reaction Mg(2+)(out) + phosphate(in) + ATP(out) = Mg(2+)(in) + phosphate(out) + ATP(in). It carries out the reaction ADP(out) + phosphate(in) + H(+)(out) = ADP(in) + phosphate(out) + H(+)(in). Calcium-independent ATP-Mg/Pi exchanger that catalyzes the electroneutral exchange of Mg-ATP or free ADP against an hydrogenphosphate and participates in the net transport of adenine nucleotides across the mitochondria inner membrane. The chain is Mitochondrial carrier protein SCaMC-3L from Bos taurus (Bovine).